The primary structure comprises 407 residues: Serine hydroxymethyltransferase (407 aa).

(6S)-5,6,7,8-tetrahydrofolate-binding positions include Leu-117 and 121 to 123 (GHL). Residue Lys-226 is modified to N6-(pyridoxal phosphate)lysine. Glu-242 provides a ligand contact to (6S)-5,6,7,8-tetrahydrofolate.

It belongs to the SHMT family. In terms of assembly, homodimer. It depends on pyridoxal 5'-phosphate as a cofactor.

Its subcellular location is the cytoplasm. The enzyme catalyses (6R)-5,10-methylene-5,6,7,8-tetrahydrofolate + glycine + H2O = (6S)-5,6,7,8-tetrahydrofolate + L-serine. It participates in one-carbon metabolism; tetrahydrofolate interconversion. It functions in the pathway amino-acid biosynthesis; glycine biosynthesis; glycine from L-serine: step 1/1. Catalyzes the reversible interconversion of serine and glycine with tetrahydrofolate (THF) serving as the one-carbon carrier. This reaction serves as the major source of one-carbon groups required for the biosynthesis of purines, thymidylate, methionine, and other important biomolecules. Also exhibits THF-independent aldolase activity toward beta-hydroxyamino acids, producing glycine and aldehydes, via a retro-aldol mechanism. This is Serine hydroxymethyltransferase from Thermus thermophilus (strain ATCC BAA-163 / DSM 7039 / HB27).